The sequence spans 447 residues: GTPase Der (447 aa).

EngA-type G domains lie at 3-167 and 180-353; these read PVIA…ALPE and IRLA…KSAN. Residues 9–16, 56–60, 119–122, 186–193, 233–237, and 298–301 each bind GTP; these read GRPNVGKS, DTGGF, NKAE, DTAGL, and NKWD. Positions 354–438 constitute a KH-like domain; sequence RKMPTPVLTR…PLRIEMKTSS (85 aa).

The protein belongs to the TRAFAC class TrmE-Era-EngA-EngB-Septin-like GTPase superfamily. EngA (Der) GTPase family. In terms of assembly, associates with the 50S ribosomal subunit.

In terms of biological role, GTPase that plays an essential role in the late steps of ribosome biogenesis. In Acidovorax ebreus (strain TPSY) (Diaphorobacter sp. (strain TPSY)), this protein is GTPase Der.